Reading from the N-terminus, the 167-residue chain is uncharacterized protein (167 aa).

Residues 140–167 (SSEEKKKKKKKKKEKSLHTEREKKKKKF) are disordered. The segment covering 145–154 (KKKKKKKKEK) has biased composition (basic residues).

This is an uncharacterized protein from Saccharomyces cerevisiae (strain ATCC 204508 / S288c) (Baker's yeast).